Reading from the N-terminus, the 801-residue chain is Phenylalanine--tRNA ligase beta subunit (801 aa).

The tRNA-binding domain occupies 39–154 (LKMPQKVVVG…GHLELGVELG (116 aa)). Residues 398-475 (IDEITIKTTF…RIYGIDNVSS (78 aa)) form the B5 domain. Mg(2+) contacts are provided by Asp453, Asp459, Glu462, and Glu463. The 93-residue stretch at 708 to 800 (SKYQKSTRDL…LVREFDAVLR (93 aa)) folds into the FDX-ACB domain.

This sequence belongs to the phenylalanyl-tRNA synthetase beta subunit family. Type 1 subfamily. In terms of assembly, tetramer of two alpha and two beta subunits. Mg(2+) is required as a cofactor.

It localises to the cytoplasm. It carries out the reaction tRNA(Phe) + L-phenylalanine + ATP = L-phenylalanyl-tRNA(Phe) + AMP + diphosphate + H(+). This chain is Phenylalanine--tRNA ligase beta subunit, found in Helicobacter hepaticus (strain ATCC 51449 / 3B1).